Reading from the N-terminus, the 454-residue chain is Mogroside I-E synthase (454 aa).

The active-site Proton acceptor is His18. His18 lines the an anthocyanidin pocket. Asp111 (charge relay) is an active-site residue. An an anthocyanidin-binding site is contributed by His144. Cys259 and Cys331 are oxidised to a cystine. Residues Ser278, Cys331, Gln333, Trp351, Asn352, Ser353, and Glu356 each contribute to the UDP-alpha-D-glucose site. Position 371 (Ala371) interacts with an anthocyanidin. Positions 372 and 373 each coordinate UDP-alpha-D-glucose.

It belongs to the UDP-glycosyltransferase family. In terms of tissue distribution, highly expressed in young fruits 15 days after anthesis (15-DAA).

It carries out the reaction mogrol + UDP-alpha-D-glucose = mogroside IE + UDP + H(+). It participates in secondary metabolite biosynthesis; terpenoid biosynthesis. Activity is increased by Mg(2+). Functionally, UDP-glycosyltransferase involved in the biosynthesis of cucurbitacin and mogroside tetracyclic triterpene natural products (e.g. siamenoside I and mogrosides IV, V and VI). Cucurbitacins have cytotoxic properties and exhibit deterrent taste as a defense barrier against herbivores. Mogrosides are nonsugar highly oxygenated compounds used as high-intensity zero-calorie sweeteners; they also possess pharmacological properties such as regulating immunity, lowering blood sugar and lipid levels, protecting the liver, and acting as antioxidants and antitumor agents. Catalyzes the transfer of a glucose moiety to the C-3 hydroxyl of mogrol to form mogroside I-E. Besides mogrol, UGT74AC1 also shows activity in vitro with quercetin and naringenin as substrate. The sequence is that of Mogroside I-E synthase from Siraitia grosvenorii (Monk's fruit).